We begin with the raw amino-acid sequence, 595 residues long: Aspartate--tRNA ligase (595 aa).

L-aspartate is bound at residue E173. An aspartate region spans residues 197–200 (QLFK). L-aspartate is bound at residue R219. ATP is bound by residues 219 to 221 (RDE) and Q228. H449 contributes to the L-aspartate binding site. Position 483 (E483) interacts with ATP. Position 490 (R490) interacts with L-aspartate. Residue 535 to 538 (GLDR) coordinates ATP.

This sequence belongs to the class-II aminoacyl-tRNA synthetase family. Type 1 subfamily. In terms of assembly, homodimer.

Its subcellular location is the cytoplasm. The catalysed reaction is tRNA(Asp) + L-aspartate + ATP = L-aspartyl-tRNA(Asp) + AMP + diphosphate. Functionally, catalyzes the attachment of L-aspartate to tRNA(Asp) in a two-step reaction: L-aspartate is first activated by ATP to form Asp-AMP and then transferred to the acceptor end of tRNA(Asp). This is Aspartate--tRNA ligase from Shewanella woodyi (strain ATCC 51908 / MS32).